The sequence spans 175 residues: ATP-dependent protease subunit HslV (175 aa).

Threonine 2 is a catalytic residue. Na(+) is bound by residues alanine 156, cysteine 159, and threonine 162.

The protein belongs to the peptidase T1B family. HslV subfamily. In terms of assembly, a double ring-shaped homohexamer of HslV is capped on each side by a ring-shaped HslU homohexamer. The assembly of the HslU/HslV complex is dependent on binding of ATP.

Its subcellular location is the cytoplasm. It carries out the reaction ATP-dependent cleavage of peptide bonds with broad specificity.. Allosterically activated by HslU binding. Its function is as follows. Protease subunit of a proteasome-like degradation complex believed to be a general protein degrading machinery. The protein is ATP-dependent protease subunit HslV of Rhizobium rhizogenes (strain K84 / ATCC BAA-868) (Agrobacterium radiobacter).